We begin with the raw amino-acid sequence, 146 residues long: Hemoglobin subunit beta (146 aa).

The residue at position 1 (Val-1) is an N-acetylvaline. In terms of domain architecture, Globin spans 2 to 146 (HLTDAEKAAI…VATALGHKYH (145 aa)). The residue at position 59 (Lys-59) is an N6-acetyllysine. Heme b is bound at residue His-63. Lys-82 carries the N6-acetyllysine modification. His-92 is a heme b binding site. The residue at position 93 (Cys-93) is an S-nitrosocysteine. An N6-acetyllysine modification is found at Lys-144.

This sequence belongs to the globin family. Heterotetramer of two alpha chains and two beta chains. As to expression, red blood cells.

In terms of biological role, involved in oxygen transport from the lung to the various peripheral tissues. The protein is Hemoglobin subunit beta (HBB) of Ondatra zibethicus (Muskrat).